Consider the following 329-residue polypeptide: Replication factor C small subunit 1 (329 aa).

44-51 (GPPGTGKT) provides a ligand contact to ATP.

This sequence belongs to the activator 1 small subunits family. RfcS subfamily. In terms of assembly, heteromultimer composed of small subunits (RfcS) and large subunits (RfcL).

Part of the RFC clamp loader complex which loads the PCNA sliding clamp onto DNA. The protein is Replication factor C small subunit 1 of Pyrobaculum islandicum (strain DSM 4184 / JCM 9189 / GEO3).